The primary structure comprises 485 residues: Cytosol non-specific dipeptidase (485 aa).

Histidine 76 contributes to the Zn(2+) binding site. Aspartate 78 is a catalytic residue. Zn(2+) is bound at residue aspartate 115. Residue glutamate 145 is the Proton acceptor of the active site. Residues glutamate 146 and aspartate 169 each contribute to the Zn(2+) site. Lysine 296 is subject to N6-acetyllysine. Histidine 457 contributes to the Zn(2+) binding site.

The protein belongs to the peptidase M20C family. Zn(2+) is required as a cofactor. It depends on Co(2+) as a cofactor.

It carries out the reaction Hydrolysis of dipeptides, preferentially hydrophobic dipeptides including prolyl amino acids.. Inhibited by metal chelators. Dipeptidase with broad substrate specificity. Requires dipeptide substrates with an unblocked N-terminus and the amino group in the alpha or beta position. Non-protein amino acids and proline are not accepted in the C-terminal position, whereas some dipeptide amides and formyl amino acids are hydrolyzed. Also shows cysteinylglycinase activity, which is sufficient for E.coli to utilize cysteinylglycine as a cysteine source. In Escherichia coli (strain K12), this protein is Cytosol non-specific dipeptidase (pepD).